Reading from the N-terminus, the 755-residue chain is Photosystem I P700 chlorophyll a apoprotein A1 (755 aa).

Helical transmembrane passes span Ile72 to Ala95, Leu158 to His181, Leu197 to Ile221, Gln297 to Tyr315, Trp352 to Tyr375, Ile391 to Val417, Ala439 to His461, and Phe536 to Leu554. Residues Cys578 and Cys587 each contribute to the [4Fe-4S] cluster site. Helical transmembrane passes span His594–Trp615 and Leu669–Phe691. His680 provides a ligand contact to chlorophyll a'. Residues Met688 and Tyr696 each contribute to the chlorophyll a site. Residue Trp697 coordinates phylloquinone. Residues Ala729 to Ala749 form a helical membrane-spanning segment.

It belongs to the PsaA/PsaB family. In terms of assembly, the PsaA/B heterodimer binds the P700 chlorophyll special pair and subsequent electron acceptors. PSI consists of a core antenna complex that captures photons, and an electron transfer chain that converts photonic excitation into a charge separation. The cyanobacterial PSI reaction center is composed of one copy each of PsaA,B,C,D,E,F,I,J,K,L,M and X, and forms trimeric complexes. The cofactor is PSI electron transfer chain: 5 chlorophyll a, 1 chlorophyll a', 2 phylloquinones and 3 4Fe-4S clusters. PSI core antenna: 90 chlorophyll a, 22 carotenoids, 3 phospholipids and 1 galactolipid. P700 is a chlorophyll a/chlorophyll a' dimer, A0 is one or more chlorophyll a, A1 is one or both phylloquinones and FX is a shared 4Fe-4S iron-sulfur center..

It is found in the cellular thylakoid membrane. It catalyses the reaction reduced [plastocyanin] + hnu + oxidized [2Fe-2S]-[ferredoxin] = oxidized [plastocyanin] + reduced [2Fe-2S]-[ferredoxin]. Functionally, psaA and PsaB bind P700, the primary electron donor of photosystem I (PSI), as well as the electron acceptors A0, A1 and FX. PSI is a plastocyanin/cytochrome c6-ferredoxin oxidoreductase, converting photonic excitation into a charge separation, which transfers an electron from the donor P700 chlorophyll pair to the spectroscopically characterized acceptors A0, A1, FX, FA and FB in turn. Oxidized P700 is reduced on the lumenal side of the thylakoid membrane by plastocyanin or cytochrome c6. The polypeptide is Photosystem I P700 chlorophyll a apoprotein A1 (Synechococcus sp. (strain JA-3-3Ab) (Cyanobacteria bacterium Yellowstone A-Prime)).